The sequence spans 134 residues: Profilin-4 (134 aa).

Cysteines 13 and 118 form a disulfide. Residues 84 to 100 (AVIRGKKGSGGITIKKT) carry the Involved in PIP2 interaction motif. Thr-114 is subject to Phosphothreonine.

It belongs to the profilin family. As to quaternary structure, occurs in many kinds of cells as a complex with monomeric actin in a 1:1 ratio. In terms of processing, phosphorylated by MAP kinases.

The protein resides in the cytoplasm. The protein localises to the cytoskeleton. Binds to actin and affects the structure of the cytoskeleton. At high concentrations, profilin prevents the polymerization of actin, whereas it enhances it at low concentrations. The sequence is that of Profilin-4 from Olea europaea (Common olive).